Consider the following 88-residue polypeptide: Small ribosomal subunit protein bS20 (88 aa).

The disordered stretch occupies residues M1–R20.

Belongs to the bacterial ribosomal protein bS20 family.

Binds directly to 16S ribosomal RNA. The sequence is that of Small ribosomal subunit protein bS20 from Phytoplasma australiense.